The following is a 1790-amino-acid chain: Cytokinesis protein sepA (1790 aa).

Disordered stretches follow at residues 1-275 (MPTS…YLTR) and 328-350 (GEQKRKQKARETHGYDGPSGILE). Positions 24–35 (ERPVEDRWDAHG) are enriched in basic and acidic residues. 2 stretches are compositionally biased toward low complexity: residues 39–62 (SLAPPSSAAGSRSSRYSKRSSIQS) and 187–203 (SHHSSSTVDSSTNSRMS). Residues 205–236 (DQASIHSSLSSNTRGSSYISTDGSSRTTLPSH) are compositionally biased toward polar residues. A GBD/FH3 domain is found at 274–702 (TRPRDDRVVD…YVAMDRRLPD (429 aa)). Over residues 328–341 (GEQKRKQKARETHG) the composition is skewed to basic and acidic residues. The stretch at 724-811 (AEARRAYDES…QRNELETREL (88 aa)) forms a coiled coil. In terms of domain architecture, FH1 spans 955–1136 (DPEQATGLLG…NYLASQGAPS (182 aa)). Positions 975–986 (ADDAKDEGKPTE) are enriched in basic and acidic residues. Disordered regions lie at residues 975-1119 (ADDA…PPGT), 1465-1484 (NLSDPKKFHPQDRVSQITQR), and 1596-1790 (RAAA…PSTS). Pro residues-rich tracts occupy residues 1015-1026 (APPPPPPPPPAH) and 1033-1118 (APPP…PPPG). The region spanning 1141 to 1564 (VMSSIRPKKK…TEASLARKRI (424 aa)) is the FH2 domain. Residues 1435–1566 (LQKLNVDQLR…ASLARKRINV (132 aa)) are a coiled coil. The DAD domain maps to 1581 to 1613 (SPATSGAMDSLLEKLRAAAPQAKDQRDRRRRAR). The segment covering 1608 to 1620 (RRRRARLKERHQV) has biased composition (basic residues). A compositionally biased stretch (polar residues) spans 1644-1661 (SGATDTNATDSSLLSPTI). Basic and acidic residues predominate over residues 1694 to 1710 (PDPERTRRRRESAEEER). Polar residues predominate over residues 1720 to 1746 (GATSGSKDSNDTTPLSPVTEPTSTQGE).

The protein belongs to the formin homology family. BNI1 subfamily.

Functionally, involved in cytokinesis. Overexpression results in growth inhibition. The chain is Cytokinesis protein sepA (sepA) from Emericella nidulans (strain FGSC A4 / ATCC 38163 / CBS 112.46 / NRRL 194 / M139) (Aspergillus nidulans).